We begin with the raw amino-acid sequence, 226 residues long: 6-deoxy-6-sulfo-D-fructose transaldolase (226 aa).

Lysine 89 (schiff-base intermediate with substrate) is an active-site residue.

Belongs to the transaldolase family.

It catalyses the reaction 6-deoxy-6-sulfo-D-fructose + D-glyceraldehyde 3-phosphate = D-fructose 6-phosphate + (2S)-3-sulfolactaldehyde. It carries out the reaction 6-deoxy-6-sulfo-D-fructose + D-erythrose 4-phosphate = (2S)-3-sulfolactaldehyde + D-sedoheptulose 7-phosphate. Part of the sulfo-TAL (or sulfo-SFT) pathway, a D-sulfoquinovose degradation pathway that produces sulfolactate (SL). Catalyzes the conversion of 6-deoxy-6-sulfo-D-fructose (SF) and glyceraldehyde 3-phosphate (GAP) into fructose-6-phosphate (F6P) and 3-sulfolactaldehyde (SLA). Can also catalyze the SF-cleavage with erythrose 4-phosphate (E4P) as acceptor, forming 3-sulfolactaldehyde (SLA) and sedoheptulose 7-phosphate (S7P). This chain is 6-deoxy-6-sulfo-D-fructose transaldolase, found in Priestia aryabhattai (Bacillus aryabhattai).